The chain runs to 342 residues: Dihydroorotate dehydrogenase (quinone) (342 aa).

FMN is bound by residues Ala65–Lys69 and Thr89. Residue Lys69 participates in substrate binding. Substrate is bound at residue Asn114–Phe118. FMN-binding residues include Asn142 and Asn175. Residue Asn175 coordinates substrate. Ser178 serves as the catalytic Nucleophile. Asn180 contacts substrate. 2 residues coordinate FMN: Lys220 and Thr248. Asn249 to Thr250 contacts substrate. FMN-binding positions include Gly271, Gly300, and Tyr321–Thr322.

This sequence belongs to the dihydroorotate dehydrogenase family. Type 2 subfamily. As to quaternary structure, monomer. It depends on FMN as a cofactor.

The protein resides in the cell membrane. The enzyme catalyses (S)-dihydroorotate + a quinone = orotate + a quinol. Its pathway is pyrimidine metabolism; UMP biosynthesis via de novo pathway; orotate from (S)-dihydroorotate (quinone route): step 1/1. Its function is as follows. Catalyzes the conversion of dihydroorotate to orotate with quinone as electron acceptor. This is Dihydroorotate dehydrogenase (quinone) from Burkholderia pseudomallei (strain 668).